Consider the following 333-residue polypeptide: Glyceraldehyde-3-phosphate dehydrogenase (333 aa).

An N-acetylserine modification is found at S1. Residues R10–I11, D31, and M76 each bind NAD(+). D-glyceraldehyde 3-phosphate-binding positions include S147 to T149, T178, T207 to G208, and R230. Residue C148 is the Nucleophile of the active site. Residue N312 participates in NAD(+) binding.

The protein belongs to the glyceraldehyde-3-phosphate dehydrogenase family. As to quaternary structure, homotetramer.

Its subcellular location is the cytoplasm. It catalyses the reaction D-glyceraldehyde 3-phosphate + phosphate + NAD(+) = (2R)-3-phospho-glyceroyl phosphate + NADH + H(+). It functions in the pathway carbohydrate degradation; glycolysis; pyruvate from D-glyceraldehyde 3-phosphate: step 1/5. The chain is Glyceraldehyde-3-phosphate dehydrogenase from Panulirus versicolor (Painted spiny lobster).